The chain runs to 415 residues: Tyrosine--tRNA ligase (415 aa).

Tyrosine 34 lines the L-tyrosine pocket. The short motif at 39–48 (PSADSLHLGN) is the 'HIGH' region element. The L-tyrosine site is built by tyrosine 162 and glutamine 166. The 'KMSKS' region motif lies at 224-228 (KFGKS). Position 227 (lysine 227) interacts with ATP. One can recognise an S4 RNA-binding domain in the interval 346–413 (IKIIDLLNLA…KRNYFLIVWN (68 aa)).

The protein belongs to the class-I aminoacyl-tRNA synthetase family. TyrS type 1 subfamily. Homodimer.

It localises to the cytoplasm. The catalysed reaction is tRNA(Tyr) + L-tyrosine + ATP = L-tyrosyl-tRNA(Tyr) + AMP + diphosphate + H(+). Catalyzes the attachment of tyrosine to tRNA(Tyr) in a two-step reaction: tyrosine is first activated by ATP to form Tyr-AMP and then transferred to the acceptor end of tRNA(Tyr). In Ureaplasma urealyticum serovar 10 (strain ATCC 33699 / Western), this protein is Tyrosine--tRNA ligase.